The following is a 207-amino-acid chain: Thymidylate kinase (207 aa).

The disordered stretch occupies residues 11-49 (EGIDGSGKSTQARRLAEHLRDTGRDPLLTREPGGSPGAE). 12-19 (GIDGSGKS) contributes to the ATP binding site. Basic and acidic residues predominate over residues 24 to 38 (RLAEHLRDTGRDPLL).

This sequence belongs to the thymidylate kinase family.

The enzyme catalyses dTMP + ATP = dTDP + ADP. Phosphorylation of dTMP to form dTDP in both de novo and salvage pathways of dTTP synthesis. The sequence is that of Thymidylate kinase from Dinoroseobacter shibae (strain DSM 16493 / NCIMB 14021 / DFL 12).